Here is a 406-residue protein sequence, read N- to C-terminus: Cysteine desulfurase (406 aa).

N6-(pyridoxal phosphate)lysine is present on Lys226. The active-site Cysteine persulfide intermediate is Cys364.

Belongs to the class-V pyridoxal-phosphate-dependent aminotransferase family. Csd subfamily. As to quaternary structure, homodimer. Interacts with SufE and the SufBCD complex composed of SufB, SufC and SufD. The interaction with SufE is required to mediate the direct transfer of the sulfur atom from the S-sulfanylcysteine. The cofactor is pyridoxal 5'-phosphate.

Its subcellular location is the cytoplasm. It carries out the reaction (sulfur carrier)-H + L-cysteine = (sulfur carrier)-SH + L-alanine. The catalysed reaction is L-selenocysteine + AH2 = hydrogenselenide + L-alanine + A + H(+). Its pathway is cofactor biosynthesis; iron-sulfur cluster biosynthesis. Functionally, cysteine desulfurases mobilize the sulfur from L-cysteine to yield L-alanine, an essential step in sulfur metabolism for biosynthesis of a variety of sulfur-containing biomolecules. Component of the suf operon, which is activated and required under specific conditions such as oxidative stress and iron limitation. Acts as a potent selenocysteine lyase in vitro, that mobilizes selenium from L-selenocysteine. Selenocysteine lyase activity is however unsure in vivo. In Enterobacter sp. (strain 638), this protein is Cysteine desulfurase.